Reading from the N-terminus, the 364-residue chain is Transcription factor TGA4 (364 aa).

A disordered region spans residues P39–D79. Residues E48–D79 show a composition bias toward basic and acidic residues. The bZIP domain maps to P78–F141. 2 coiled-coil regions span residues D79 to G127 and N257 to Q277. The tract at residues K80 to K100 is basic motif. Residues L106–L120 form a leucine-zipper region. The 211-residue stretch at I149–R359 folds into the DOG1 domain. C256 and C262 are joined by a disulfide.

The protein belongs to the bZIP family. As to quaternary structure, binds DNA as a dimer. Interaction with the Dof domain proteins OBP1, OBP2 or OBP3 enhances the binding to the ocs element. Interacts with RAP2-3/EPB, an ethylene-responsive element binding protein. The reduced form interacts with NPR1. Predominantly expressed in roots.

The protein resides in the nucleus. Its function is as follows. Transcriptional activator that binds specifically to the DNA sequence 5'-TGACG-3'. Recognizes ocs elements like the as-1 motif of the cauliflower mosaic virus 35S promoter. Binding to the as-1-like cis elements mediate auxin- and salicylic acid-inducible transcription. May be involved in the induction of the systemic acquired resistance (SAR) via its interaction with NPR1. Could also bind to the Hex-motif (5'-TGACGTGG-3') another cis-acting element found in plant histone promoters. In Arabidopsis thaliana (Mouse-ear cress), this protein is Transcription factor TGA4 (TGA4).